We begin with the raw amino-acid sequence, 318 residues long: Protoheme IX farnesyltransferase (318 aa).

9 helical membrane-spanning segments follow: residues 29–49 (IIPL…QGQV), 51–71 (PVLL…AQTI), 102–122 (LIFA…FANL), 123–143 (LAAS…THWL), 151–171 (IVIG…AVTG), 179–199 (LIFA…ALMI), 219–239 (ATVK…LLLV), 241–261 (PLHS…AVFI), and 280–300 (LFLY…IDSL).

The protein belongs to the UbiA prenyltransferase family. Protoheme IX farnesyltransferase subfamily.

The protein localises to the cell inner membrane. The enzyme catalyses heme b + (2E,6E)-farnesyl diphosphate + H2O = Fe(II)-heme o + diphosphate. Its pathway is porphyrin-containing compound metabolism; heme O biosynthesis; heme O from protoheme: step 1/1. Functionally, converts heme B (protoheme IX) to heme O by substitution of the vinyl group on carbon 2 of heme B porphyrin ring with a hydroxyethyl farnesyl side group. The chain is Protoheme IX farnesyltransferase from Trichormus variabilis (strain ATCC 29413 / PCC 7937) (Anabaena variabilis).